A 111-amino-acid polypeptide reads, in one-letter code: Viscotoxin-A3 (111 aa).

Positions 1–26 are cleaved as a signal peptide; it reads MEVVRGSSLVLLVLLLGALLVSQVES. 3 disulfides stabilise this stretch: Cys29–Cys66, Cys30–Cys58, and Cys42–Cys52. Positions 73–111 are cleaved as a propeptide — acidic domain; the sequence is FYCTLGCESSQCATNSNGDAEAVRCKTACSDLCQDVDDA.

The protein belongs to the plant thionin (TC 1.C.44) family.

The protein localises to the secreted. Functionally, thionins are small plant proteins which are toxic to animal cells. They seem to exert their toxic effect at the level of the cell membrane. Their precise function is not known. This is Viscotoxin-A3 (THI2.1) from Viscum album (European mistletoe).